The chain runs to 246 residues: Bis(5'-nucleosyl)-tetraphosphatase PrpE [asymmetrical] (246 aa).

This sequence belongs to the PrpE family. Ni(2+) is required as a cofactor.

It carries out the reaction P(1),P(4)-bis(5'-guanosyl) tetraphosphate + H2O = GMP + GTP + 2 H(+). Its function is as follows. Asymmetrically hydrolyzes Ap4p to yield AMP and ATP. The protein is Bis(5'-nucleosyl)-tetraphosphatase PrpE [asymmetrical] of Bacillus cereus (strain B4264).